A 196-amino-acid chain; its full sequence is Imidazole glycerol phosphate synthase subunit HisH (196 aa).

One can recognise a Glutamine amidotransferase type-1 domain in the interval 2-196; sequence NVVIVDTECA…LKRFLELTLC (195 aa). C77 (nucleophile) is an active-site residue. Active-site residues include H175 and E177.

In terms of assembly, heterodimer of HisH and HisF.

It is found in the cytoplasm. The catalysed reaction is 5-[(5-phospho-1-deoxy-D-ribulos-1-ylimino)methylamino]-1-(5-phospho-beta-D-ribosyl)imidazole-4-carboxamide + L-glutamine = D-erythro-1-(imidazol-4-yl)glycerol 3-phosphate + 5-amino-1-(5-phospho-beta-D-ribosyl)imidazole-4-carboxamide + L-glutamate + H(+). It catalyses the reaction L-glutamine + H2O = L-glutamate + NH4(+). The protein operates within amino-acid biosynthesis; L-histidine biosynthesis; L-histidine from 5-phospho-alpha-D-ribose 1-diphosphate: step 5/9. Its function is as follows. IGPS catalyzes the conversion of PRFAR and glutamine to IGP, AICAR and glutamate. The HisH subunit catalyzes the hydrolysis of glutamine to glutamate and ammonia as part of the synthesis of IGP and AICAR. The resulting ammonia molecule is channeled to the active site of HisF. The protein is Imidazole glycerol phosphate synthase subunit HisH of Idiomarina loihiensis (strain ATCC BAA-735 / DSM 15497 / L2-TR).